The following is a 184-amino-acid chain: Ras-related protein O-Krev (184 aa).

10 to 17 (GSGGVGKS) contacts GTP. The short motif at 32–40 (YDPTIEDSY) is the Effector region element. GTP contacts are provided by residues 57–61 (DTAGT) and 116–119 (NKCD). Cys-181 bears the Cysteine methyl ester mark. Residue Cys-181 is the site of S-geranylgeranyl cysteine attachment. The propeptide at 182-184 (TLL) is removed in mature form.

Belongs to the small GTPase superfamily. Ras family.

The protein resides in the cell membrane. The enzyme catalyses GTP + H2O = GDP + phosphate + H(+). The sequence is that of Ras-related protein O-Krev from Diplobatis ommata (Ocellated electric ray).